Reading from the N-terminus, the 121-residue chain is Basic phospholipase A2 homolog BaTX (121 aa).

7 disulfide bridges follow: Cys26/Cys115, Cys28/Cys44, Cys43/Cys95, Cys49/Cys121, Cys50/Cys88, Cys57/Cys81, and Cys75/Cys86. Positions 105–117 (KKYRYYLKPLCKK) are important for membrane-damaging activities in eukaryotes and bacteria; heparin-binding.

Belongs to the phospholipase A2 family. Group II subfamily. K49 sub-subfamily. Homodimer; non-covalently linked. In terms of tissue distribution, expressed by the venom gland.

It localises to the secreted. Its function is as follows. Snake venom phospholipase A2 homolog that lacks enzymatic activity. Is myotoxic and displays edema-inducing activities. In vitro, produced time-dependent, irreversible neuromuscular blockade in isolated mouse phrenic nerve-diaphragm and chick biventer cervicis preparations. A model of myotoxic mechanism has been proposed: an apo Lys49-PLA2 is activated by the entrance of a hydrophobic molecule (e.g. fatty acid) at the hydrophobic channel of the protein leading to a reorientation of a monomer. This reorientation causes a transition between 'inactive' to 'active' states, causing alignment of C-terminal and membrane-docking sites (MDoS) side-by-side and putting the membrane-disruption sites (MDiS) in the same plane, exposed to solvent and in a symmetric position for both monomers. The MDoS region stabilizes the toxin on membrane by the interaction of charged residues with phospholipid head groups. Subsequently, the MDiS region destabilizes the membrane with penetration of hydrophobic residues. This insertion causes a disorganization of the membrane, allowing an uncontrolled influx of ions (i.e. calcium and sodium), and eventually triggering irreversible intracellular alterations and cell death. This Bothrops alternatus (Urutu) protein is Basic phospholipase A2 homolog BaTX.